The chain runs to 51 residues: uncharacterized protein (51 aa).

A helical membrane pass occupies residues 20 to 42 (NFFSRMWNAVVFGFGAAIGASVA).

The protein resides in the membrane. This is an uncharacterized protein from Schizosaccharomyces pombe (strain 972 / ATCC 24843) (Fission yeast).